The primary structure comprises 281 residues: Probable feruloyl esterase A (281 aa).

Residues 1–21 form the signal peptide; the sequence is MKNFFSMHAILLACSAGAGLA. 3 disulfides stabilise this stretch: Cys-50–Cys-279, Cys-112–Cys-115, and Cys-248–Cys-255. A substrate-binding site is contributed by Asp-98. Asn-100 carries an N-linked (GlcNAc...) asparagine glycan. Position 101 (Tyr-101) interacts with substrate. Ser-154 (nucleophile) is an active-site residue. An N-linked (GlcNAc...) asparagine glycan is attached at Asn-173. The active-site Charge relay system is the Asp-215. His-268 is a substrate binding site. His-268 serves as the catalytic Charge relay system.

It belongs to the AB hydrolase superfamily. FaeA family.

Its subcellular location is the secreted. It catalyses the reaction feruloyl-polysaccharide + H2O = ferulate + polysaccharide.. In terms of biological role, involved in degradation of plant cell walls. Hydrolyzes the feruloyl-arabinose ester bond in arabinoxylans, and the feruloyl-galactose ester bond in pectin. This Aspergillus oryzae (strain ATCC 42149 / RIB 40) (Yellow koji mold) protein is Probable feruloyl esterase A (faeA).